Consider the following 420-residue polypeptide: Polyketide biosynthesis 3-hydroxy-3-methylglutaryl-ACP synthase PksG (420 aa).

Residue E82 is the Proton donor/acceptor of the active site. C114 serves as the catalytic Acyl-thioester intermediate. H250 functions as the Proton donor/acceptor in the catalytic mechanism.

This sequence belongs to the thiolase-like superfamily. HMG-CoA synthase family.

Its subcellular location is the cytoplasm. The enzyme catalyses 3-oxobutanoyl-[ACP] + acetyl-[ACP] + H2O = (3S)-hydroxy-3-methylglutaryl-[ACP] + holo-[ACP] + H(+). It functions in the pathway antibiotic biosynthesis; bacillaene biosynthesis. Involved in some intermediate steps for the synthesis of the antibiotic polyketide bacillaene which is involved in secondary metabolism. It catalyzes the aldol condensation between the acetyl group attached to the acyl-carrier-protein AcpK (Ac-AcpK) and a beta-ketothioester polyketide intermediate linked to one of the consecutive thiolation domains of PksL. The polypeptide is Polyketide biosynthesis 3-hydroxy-3-methylglutaryl-ACP synthase PksG (pksG) (Bacillus subtilis (strain 168)).